The chain runs to 295 residues: MTIIIDGKKIASGLCEKLSQRIDVLKREHSIFPCLKVIFVGNNPASQVYVRNKQKKAESIGISSETIVLPDNILENELIEKINELNNDRFVNGILVQLPLPNHINASKVINTVSVEKDVDAFHRENVGKLVKGEKNCLVPCTPKGALHLIKLVETNLSGKNAVVIGRSNIVGKPMFHLLLQENCTVTILHSQSKDLAEYCSKADVVVTAVGKPNFVQEGWIKEGAIVIDVGINSVSIEGKTKLIGDVDFDRVKEKTKAITPVPGGVGPMTIAFLMINTVIAACLQKKVDASDFVS.

Residues 166-168, serine 191, and isoleucine 232 each bind NADP(+); that span reads GRS.

It belongs to the tetrahydrofolate dehydrogenase/cyclohydrolase family. As to quaternary structure, homodimer.

The catalysed reaction is (6R)-5,10-methylene-5,6,7,8-tetrahydrofolate + NADP(+) = (6R)-5,10-methenyltetrahydrofolate + NADPH. It catalyses the reaction (6R)-5,10-methenyltetrahydrofolate + H2O = (6R)-10-formyltetrahydrofolate + H(+). It participates in one-carbon metabolism; tetrahydrofolate interconversion. Its function is as follows. Catalyzes the oxidation of 5,10-methylenetetrahydrofolate to 5,10-methenyltetrahydrofolate and then the hydrolysis of 5,10-methenyltetrahydrofolate to 10-formyltetrahydrofolate. This Wolbachia sp. subsp. Brugia malayi (strain TRS) protein is Bifunctional protein FolD.